A 225-amino-acid chain; its full sequence is MAEAKPAPEKEAAAKTESVPVETEGEGPSVKEGSTSLVSIDEYLAAGVHIGTQQKTQDMMRFVYRVRTDGLYVLDIQSTDERIRVAAKLLSHYDPSRILVVSSRQYGQHPARMFSRALSTKSMLGRFIPGLLTNPQIHGFFEPDIVIVTDPAGDAQVLKEASSIGVPIVALCDTNNLTSNVDLVIPTNNKGRKALSLVYWLLAREVSRLNSTPFNYELTDFETPL.

Basic and acidic residues predominate over residues 1–14 (MAEAKPAPEKEAAA). The tract at residues 1-33 (MAEAKPAPEKEAAAKTESVPVETEGEGPSVKEG) is disordered.

This sequence belongs to the universal ribosomal protein uS2 family.

The protein is Small ribosomal subunit protein uS2 of Methanosarcina barkeri (strain Fusaro / DSM 804).